Here is a 173-residue protein sequence, read N- to C-terminus: Translation initiation factor IF-3 (173 aa).

Belongs to the IF-3 family. As to quaternary structure, monomer.

It is found in the cytoplasm. IF-3 binds to the 30S ribosomal subunit and shifts the equilibrium between 70S ribosomes and their 50S and 30S subunits in favor of the free subunits, thus enhancing the availability of 30S subunits on which protein synthesis initiation begins. The protein is Translation initiation factor IF-3 of Neisseria gonorrhoeae (strain ATCC 700825 / FA 1090).